A 321-amino-acid chain; its full sequence is MTKYALVGDVGGTNARLALCDIASGEISQAKTYSGLDYPSLEAVVRVYLDEHSVSVEDGCIAIACPITGDWVAMTNHTWAFSIAEMKKNLGFSHLEIINDFTAVSMAIPMLKKEHLIQFGGGEPVDGKPIAVYGAGTGLGVAHLVHVDKRWISLPGEGGHVDFAPNSEEEAMILEILRAEIGHVSAERVLSGPGLVNLYRAIVKSDNRLPENLRPKDITARALADSCIDCRRALSLFCVIMGRFGGDLALTLGTFGGVYIAGGIVPRFLEFFKASGFRGGFEDKGRFKDYVHSIPVYLIVHDNPGLLGSGAHLRQTLGHIL.

Residue 8-13 (GDVGGT) coordinates ATP.

It belongs to the bacterial glucokinase family.

Its subcellular location is the cytoplasm. It carries out the reaction D-glucose + ATP = D-glucose 6-phosphate + ADP + H(+). This is Glucokinase from Salmonella arizonae (strain ATCC BAA-731 / CDC346-86 / RSK2980).